The chain runs to 581 residues: Estrogen receptor (581 aa).

Positions 1–144 (MYPEDSRVSG…GFEMAKEMRF (144 aa)) are modulating. Disordered stretches follow at residues 45 to 66 (APLD…SGPN) and 99 to 123 (RSSV…DSYS). The segment covering 56 to 66 (GSLQSLGSGPN) has biased composition (polar residues). Positions 142 to 217 (MRFCAVCSDY…VGMMKGGVRK (76 aa)) form a DNA-binding region, nuclear receptor. 2 consecutive NR C4-type zinc fingers follow at residues 145-165 (CAVC…CEGC) and 181-200 (CPAT…CQAC). The segment at 211–272 (MKGGVRKDRG…GGGKSSVISM (62 aa)) is hinge. The segment covering 216–246 (RKDRGRVLRRDKRRTGTSDRDKASKGLEHRT) has biased composition (basic and acidic residues). The disordered stretch occupies residues 216–269 (RKDRGRVLRRDKRRTGTSDRDKASKGLEHRTAPPQDRRKHISSSAGGGGGKSSV). The 237-residue stretch at 273-509 (PPDQVLLLLR…DLLLEMLDAH (237 aa)) folds into the NR LBD domain. A compositionally biased stretch (basic and acidic residues) spans 514 to 528 (PDRPAETWSQADREP). The segment at 514-581 (PDRPAETWSQ…VHPHPMKPTE (68 aa)) is disordered. Basic residues predominate over residues 572–581 (VHPHPMKPTE).

This sequence belongs to the nuclear hormone receptor family. NR3 subfamily. As to quaternary structure, binds DNA as a homodimer. Can form a heterodimer with ER-beta.

The protein localises to the nucleus. Functionally, the steroid hormones and their receptors are involved in the regulation of eukaryotic gene expression and affect cellular proliferation and differentiation in target tissues. The polypeptide is Estrogen receptor (esr1) (Sparus aurata (Gilthead sea bream)).